We begin with the raw amino-acid sequence, 291 residues long: 4-diphosphocytidyl-2-C-methyl-D-erythritol kinase (291 aa).

Lys-10 is a catalytic residue. 99–109 contributes to the ATP binding site; the sequence is PMGGGLGGGSS. Residue Asp-141 is part of the active site.

It belongs to the GHMP kinase family. IspE subfamily. As to quaternary structure, homodimer.

The enzyme catalyses 4-CDP-2-C-methyl-D-erythritol + ATP = 4-CDP-2-C-methyl-D-erythritol 2-phosphate + ADP + H(+). Its pathway is isoprenoid biosynthesis; isopentenyl diphosphate biosynthesis via DXP pathway; isopentenyl diphosphate from 1-deoxy-D-xylulose 5-phosphate: step 3/6. Functionally, catalyzes the phosphorylation of the position 2 hydroxy group of 4-diphosphocytidyl-2C-methyl-D-erythritol. This chain is 4-diphosphocytidyl-2-C-methyl-D-erythritol kinase, found in Photorhabdus laumondii subsp. laumondii (strain DSM 15139 / CIP 105565 / TT01) (Photorhabdus luminescens subsp. laumondii).